Here is a 363-residue protein sequence, read N- to C-terminus: tRNA/tmRNA (uracil-C(5))-methyltransferase (363 aa).

The S-adenosyl-L-methionine site is built by glutamine 187, tyrosine 215, asparagine 220, glutamate 236, and aspartate 296. Cysteine 321 functions as the Nucleophile in the catalytic mechanism. Residue glutamate 355 is the Proton acceptor of the active site.

This sequence belongs to the class I-like SAM-binding methyltransferase superfamily. RNA M5U methyltransferase family. TrmA subfamily.

The catalysed reaction is uridine(54) in tRNA + S-adenosyl-L-methionine = 5-methyluridine(54) in tRNA + S-adenosyl-L-homocysteine + H(+). The enzyme catalyses uridine(341) in tmRNA + S-adenosyl-L-methionine = 5-methyluridine(341) in tmRNA + S-adenosyl-L-homocysteine + H(+). Functionally, dual-specificity methyltransferase that catalyzes the formation of 5-methyluridine at position 54 (m5U54) in all tRNAs, and that of position 341 (m5U341) in tmRNA (transfer-mRNA). The chain is tRNA/tmRNA (uracil-C(5))-methyltransferase from Pseudomonas paraeruginosa (strain DSM 24068 / PA7) (Pseudomonas aeruginosa (strain PA7)).